Consider the following 95-residue polypeptide: Aspartyl/glutamyl-tRNA(Asn/Gln) amidotransferase subunit C (95 aa).

The protein belongs to the GatC family. In terms of assembly, heterotrimer of A, B and C subunits.

The enzyme catalyses L-glutamyl-tRNA(Gln) + L-glutamine + ATP + H2O = L-glutaminyl-tRNA(Gln) + L-glutamate + ADP + phosphate + H(+). The catalysed reaction is L-aspartyl-tRNA(Asn) + L-glutamine + ATP + H2O = L-asparaginyl-tRNA(Asn) + L-glutamate + ADP + phosphate + 2 H(+). Its function is as follows. Allows the formation of correctly charged Asn-tRNA(Asn) or Gln-tRNA(Gln) through the transamidation of misacylated Asp-tRNA(Asn) or Glu-tRNA(Gln) in organisms which lack either or both of asparaginyl-tRNA or glutaminyl-tRNA synthetases. The reaction takes place in the presence of glutamine and ATP through an activated phospho-Asp-tRNA(Asn) or phospho-Glu-tRNA(Gln). The sequence is that of Aspartyl/glutamyl-tRNA(Asn/Gln) amidotransferase subunit C from Ruegeria sp. (strain TM1040) (Silicibacter sp.).